The chain runs to 361 residues: Ribosomal RNA large subunit methyltransferase M (361 aa).

Residues serine 187, 220 to 223 (CPGG), aspartate 239, aspartate 259, and aspartate 276 each bind S-adenosyl-L-methionine. Residue lysine 305 is the Proton acceptor of the active site.

It belongs to the class I-like SAM-binding methyltransferase superfamily. RNA methyltransferase RlmE family. RlmM subfamily. In terms of assembly, monomer.

Its subcellular location is the cytoplasm. It carries out the reaction cytidine(2498) in 23S rRNA + S-adenosyl-L-methionine = 2'-O-methylcytidine(2498) in 23S rRNA + S-adenosyl-L-homocysteine + H(+). Functionally, catalyzes the 2'-O-methylation at nucleotide C2498 in 23S rRNA. This is Ribosomal RNA large subunit methyltransferase M from Shewanella amazonensis (strain ATCC BAA-1098 / SB2B).